Here is a 290-residue protein sequence, read N- to C-terminus: Phosphatidylserine decarboxylase proenzyme (290 aa).

Active-site charge relay system; for autoendoproteolytic cleavage activity residues include Asp-96, His-153, and Ser-257. Ser-257 serves as the catalytic Schiff-base intermediate with substrate; via pyruvic acid; for decarboxylase activity. At Ser-257 the chain carries Pyruvic acid (Ser); by autocatalysis.

The protein belongs to the phosphatidylserine decarboxylase family. PSD-B subfamily. Prokaryotic type I sub-subfamily. Heterodimer of a large membrane-associated beta subunit and a small pyruvoyl-containing alpha subunit. Requires pyruvate as cofactor. In terms of processing, is synthesized initially as an inactive proenzyme. Formation of the active enzyme involves a self-maturation process in which the active site pyruvoyl group is generated from an internal serine residue via an autocatalytic post-translational modification. Two non-identical subunits are generated from the proenzyme in this reaction, and the pyruvate is formed at the N-terminus of the alpha chain, which is derived from the carboxyl end of the proenzyme. The autoendoproteolytic cleavage occurs by a canonical serine protease mechanism, in which the side chain hydroxyl group of the serine supplies its oxygen atom to form the C-terminus of the beta chain, while the remainder of the serine residue undergoes an oxidative deamination to produce ammonia and the pyruvoyl prosthetic group on the alpha chain. During this reaction, the Ser that is part of the protease active site of the proenzyme becomes the pyruvoyl prosthetic group, which constitutes an essential element of the active site of the mature decarboxylase.

The protein resides in the cell membrane. It carries out the reaction a 1,2-diacyl-sn-glycero-3-phospho-L-serine + H(+) = a 1,2-diacyl-sn-glycero-3-phosphoethanolamine + CO2. It participates in phospholipid metabolism; phosphatidylethanolamine biosynthesis; phosphatidylethanolamine from CDP-diacylglycerol: step 2/2. In terms of biological role, catalyzes the formation of phosphatidylethanolamine (PtdEtn) from phosphatidylserine (PtdSer). The sequence is that of Phosphatidylserine decarboxylase proenzyme from Haemophilus influenzae (strain 86-028NP).